We begin with the raw amino-acid sequence, 160 residues long: CST complex subunit STN1 (160 aa).

The OB DNA-binding region spans 41–133 (VEIVGTIVSR…QITANVAVAE (93 aa)).

This sequence belongs to the STN1 family. Component of the CST complex, composed of CTC1, TEN1 and STN1. Interacts with CTC1. Interacts with TEN1. Interacts with POT1A. In vitro interaction with TEN1 and POT1A is mutually exclusive, indicating that POT1A and TEN1 may compete for the same binding site. In terms of tissue distribution, widely expressed.

The protein localises to the nucleus. It localises to the chromosome. It is found in the telomere. In terms of biological role, component of the CST complex, a complex that binds to single-stranded DNA and is required to protect telomeres from DNA degradation. The CST complex binds single-stranded DNA with high affinity in a sequence-independent manner, while isolated subunits bind DNA with low affinity by themselves. Associates with enzymatically active telomerase. Plays a genomewide role in DNA replication and facilitates re-replication at non-telomeric loci. The chain is CST complex subunit STN1 from Arabidopsis thaliana (Mouse-ear cress).